Consider the following 240-residue polypeptide: Uridylate kinase (240 aa).

ATP is bound at residue lysine 12–glycine 15. Position 54 (glycine 54) interacts with UMP. The ATP site is built by glycine 55 and arginine 59. UMP contacts are provided by residues aspartate 74 and threonine 135 to threonine 142. Positions 162, 168, and 171 each coordinate ATP.

The protein belongs to the UMP kinase family. In terms of assembly, homohexamer.

It is found in the cytoplasm. The enzyme catalyses UMP + ATP = UDP + ADP. It functions in the pathway pyrimidine metabolism; CTP biosynthesis via de novo pathway; UDP from UMP (UMPK route): step 1/1. Inhibited by UTP. In terms of biological role, catalyzes the reversible phosphorylation of UMP to UDP. This Xanthomonas axonopodis pv. citri (strain 306) protein is Uridylate kinase.